Here is a 241-residue protein sequence, read N- to C-terminus: Demethylmenaquinone methyltransferase (241 aa).

2 residues coordinate S-adenosyl-L-methionine: Thr-73 and Asp-92.

Belongs to the class I-like SAM-binding methyltransferase superfamily. MenG/UbiE family.

It carries out the reaction a 2-demethylmenaquinol + S-adenosyl-L-methionine = a menaquinol + S-adenosyl-L-homocysteine + H(+). The protein operates within quinol/quinone metabolism; menaquinone biosynthesis; menaquinol from 1,4-dihydroxy-2-naphthoate: step 2/2. Methyltransferase required for the conversion of demethylmenaquinol (DMKH2) to menaquinol (MKH2). The sequence is that of Demethylmenaquinone methyltransferase from Chlorobaculum parvum (strain DSM 263 / NCIMB 8327) (Chlorobium vibrioforme subsp. thiosulfatophilum).